A 388-amino-acid chain; its full sequence is Succinate--CoA ligase [ADP-forming] subunit beta (388 aa).

The 236-residue stretch at 9–244 folds into the ATP-grasp domain; that stretch reads KALFAEYGLP…PSQDDAREAH (236 aa). Residues K46, 53 to 55, E99, T102, and E107 contribute to the ATP site; that span reads GRG. Mg(2+)-binding residues include N199 and D213. Substrate is bound by residues N264 and 321-323; that span reads GIV.

This sequence belongs to the succinate/malate CoA ligase beta subunit family. In terms of assembly, heterotetramer of two alpha and two beta subunits. Mg(2+) is required as a cofactor.

The catalysed reaction is succinate + ATP + CoA = succinyl-CoA + ADP + phosphate. It catalyses the reaction GTP + succinate + CoA = succinyl-CoA + GDP + phosphate. It participates in carbohydrate metabolism; tricarboxylic acid cycle; succinate from succinyl-CoA (ligase route): step 1/1. In terms of biological role, succinyl-CoA synthetase functions in the citric acid cycle (TCA), coupling the hydrolysis of succinyl-CoA to the synthesis of either ATP or GTP and thus represents the only step of substrate-level phosphorylation in the TCA. The beta subunit provides nucleotide specificity of the enzyme and binds the substrate succinate, while the binding sites for coenzyme A and phosphate are found in the alpha subunit. This is Succinate--CoA ligase [ADP-forming] subunit beta from Shewanella pealeana (strain ATCC 700345 / ANG-SQ1).